The following is a 355-amino-acid chain: MKLDDFDFDLPDGLIATRPARPRSSARLLVADGPETHDLTVADLPSMLRRGDRLVLNDTRVIPARLTGTRTRMSAQGEVTARIEVTLMEPQADGTWSALAKPMRKLKAGEKIIFSNALQADVHAMDEGLRLAFNVEGDDFDAALNAAGAMPLPPYIAGKRAPDARDYHDYQTIWAKRAGAVAAPTASLHFDEHLMDALTSRGVDVTFVTLHVGAGTFLPVTVDDVTTHKMHAEWGEVRATAAAEINATKAAGGRIIPVGTTALRLIESAAQDGTIHPFEGTTDIFIYPGYRWQITDALMTNFHLPKSTLLMLVSALMGKDRMDAVYAHAIANQYRFFSYGDASLLFPSQKGQTSR.

Belongs to the QueA family. Monomer.

The protein resides in the cytoplasm. It catalyses the reaction 7-aminomethyl-7-carbaguanosine(34) in tRNA + S-adenosyl-L-methionine = epoxyqueuosine(34) in tRNA + adenine + L-methionine + 2 H(+). The protein operates within tRNA modification; tRNA-queuosine biosynthesis. In terms of biological role, transfers and isomerizes the ribose moiety from AdoMet to the 7-aminomethyl group of 7-deazaguanine (preQ1-tRNA) to give epoxyqueuosine (oQ-tRNA). The chain is S-adenosylmethionine:tRNA ribosyltransferase-isomerase from Jannaschia sp. (strain CCS1).